A 294-amino-acid polypeptide reads, in one-letter code: MAITAQMVKELREKTGAGMMDCKKALTETNGDMEKAIDWLREKGIAKAAKKADRIAAEGMTLVEVDGNTAVILEVNSETDFVAKNEAFQTLVKELAAHLLKHKPATLEEALGQTMDNGATVQEHINAAIAKIGEKITLRRFEIVEKGENDVFGAYLHMGGRIGVLTLLAGSANQEVAKDVAMHIAALHPKYVSRDQVPQEEINREREVLKQQALNEGKPEHIVEKMVEGRLNKFYEDICLLEQAFVKNPDVKVRQYVESNGATVKTFIRYEVGEGMEKRQDNFAEEVMNQMRKQ.

Residues 79–82 are involved in Mg(2+) ion dislocation from EF-Tu; it reads TDFV.

It belongs to the EF-Ts family.

The protein localises to the cytoplasm. Associates with the EF-Tu.GDP complex and induces the exchange of GDP to GTP. It remains bound to the aminoacyl-tRNA.EF-Tu.GTP complex up to the GTP hydrolysis stage on the ribosome. This is Elongation factor Ts from Geobacillus sp. (strain WCH70).